Here is a 207-residue protein sequence, read N- to C-terminus: Glycerol-3-phosphate acyltransferase (207 aa).

The next 5 helical transmembrane spans lie at 2-22 (ILVL…GVVI), 47-67 (MLGP…GTLA), 72-92 (ILFG…AVFG), 121-141 (FFVI…MVSV), and 155-175 (LVYH…VFLI).

The protein belongs to the PlsY family. As to quaternary structure, probably interacts with PlsX.

It is found in the cell membrane. The catalysed reaction is an acyl phosphate + sn-glycerol 3-phosphate = a 1-acyl-sn-glycero-3-phosphate + phosphate. Its pathway is lipid metabolism; phospholipid metabolism. Catalyzes the transfer of an acyl group from acyl-phosphate (acyl-PO(4)) to glycerol-3-phosphate (G3P) to form lysophosphatidic acid (LPA). This enzyme utilizes acyl-phosphate as fatty acyl donor, but not acyl-CoA or acyl-ACP. This chain is Glycerol-3-phosphate acyltransferase, found in Lacticaseibacillus casei (strain BL23) (Lactobacillus casei).